The chain runs to 71 residues: MGGRRRKKRTNDTKHVRFAAAVEVWEADDIERKGPWEQVAVDRFRFQRRIASVEELLSTVLLRQKKLLEQQ.

Important for host CHOP inhibition regions lie at residues 16–18 (VRF) and 57–61 (LSTVL).

It belongs to the asfivirus DP71L family. In terms of assembly, interacts (via C-terminus) with host PPP1CB.

In terms of biological role, interacts with the host phosphatase PP1 catalytic subunit (PPP1CB) and recruits it to dephosphorylate EIF2S1/eIF2alpha and therefore restores the host translation that has been shut-down by the host. Also inhibits the EIF2S1/eIF2alpha-ATF4-DDIT3/CHOP pathway. This chain is Protein DP71L, found in African swine fever virus (strain Badajoz 1971 Vero-adapted) (Ba71V).